The chain runs to 92 residues: Small nuclear ribonucleoprotein E (92 aa).

Residues 18–92 enclose the Sm domain; it reads INLIFRYLQN…NITLLQSVSN (75 aa).

Belongs to the snRNP Sm proteins family. Core component of the spliceosomal U1, U2, U4 and U5 small nuclear ribonucleoproteins (snRNPs), the building blocks of the spliceosome. Most spliceosomal snRNPs contain a common set of Sm proteins, SNRPB, SNRPD1, SNRPD2, SNRPD3, SNRPE, SNRPF and SNRPG that assemble in a heptameric protein ring on the Sm site of the small nuclear RNA to form the core snRNP. Component of the U1 snRNP. The U1 snRNP is composed of the U1 snRNA and the 7 core Sm proteins SNRPB, SNRPD1, SNRPD2, SNRPD3, SNRPE, SNRPF and SNRPG, and at least three U1 snRNP-specific proteins SNRNP70/U1-70K, SNRPA/U1-A and SNRPC/U1-C. Component of the U4/U6-U5 tri-snRNP complex composed of the U4, U6 and U5 snRNAs and at least PRPF3, PRPF4, PRPF6, PRPF8, PRPF31, SNRNP200, TXNL4A, SNRNP40, SNRPB, SNRPD1, SNRPD2, SNRPD3, SNRPE, SNRPF, SNRPG, DDX23, CD2BP2, PPIH, SNU13, EFTUD2, SART1 and USP39, plus LSM2, LSM3, LSM4, LSM5, LSM6, LSM7 and LSM8. Component of the U7 snRNP complex, or U7 Sm protein core complex, that is composed of the U7 snRNA and at least LSM10, LSM11, SNRPB, SNRPD3, SNRPE, SNRPF and SNRPG; the complex does not contain SNRPD1 and SNRPD2. Component of the minor spliceosome, which splices U12-type introns. Part of the SMN-Sm complex that contains SMN1, GEMIN2/SIP1, DDX20/GEMIN3, GEMIN4, GEMIN5, GEMIN6, GEMIN7, GEMIN8, STRAP/UNRIP and the Sm proteins SNRPB, SNRPD1, SNRPD2, SNRPD3, SNRPE, SNRPF and SNRPG; catalyzes core snRNPs assembly. Forms a 6S pICln-Sm complex composed of CLNS1A/pICln, SNRPD1, SNRPD2, SNRPE, SNRPF and SNRPG; ring-like structure where CLNS1A/pICln mimics additional Sm proteins and which is unable to assemble into the core snRNP. Interacts with SMN1; the interaction is direct. Interacts with GEMIN2 (via N-terminus); the interaction is direct. Interacts with SNRPF; the interaction is direct. Interacts with SNRPG; the interaction is direct.

The protein resides in the cytoplasm. It localises to the cytosol. Its subcellular location is the nucleus. In terms of biological role, plays a role in pre-mRNA splicing as a core component of the spliceosomal U1, U2, U4 and U5 small nuclear ribonucleoproteins (snRNPs), the building blocks of the spliceosome. Component of both the pre-catalytic spliceosome B complex and activated spliceosome C complexes. As a component of the minor spliceosome, involved in the splicing of U12-type introns in pre-mRNAs. As part of the U7 snRNP it is involved in histone 3'-end processing. The chain is Small nuclear ribonucleoprotein E (SNRPE) from Sus scrofa (Pig).